The sequence spans 124 residues: U13-hexatoxin-Mg1a (124 aa).

A signal peptide spans 1–17; that stretch reads MKLSALVFVASVMLVAA. A propeptide spanning residues 18–52 is cleaved from the precursor; the sequence is SPVKDVEEPVETHLAADLKTIEELAKYEEAAVQKR. Cystine bridges form between Cys54–Cys72, Cys65–Cys78, Cys69–Cys116, and Cys71–Cys87.

Expressed by the venom gland.

The protein localises to the secreted. Its function is as follows. No toxicity is observed upon intracranial injection into mice and intrathorax injection into crickets. This chain is U13-hexatoxin-Mg1a, found in Macrothele gigas (Japanese funnel web spider).